Here is a 284-residue protein sequence, read N- to C-terminus: Lipoyl synthase (284 aa).

Cys38, Cys43, Cys49, Cys64, Cys68, Cys71, and Ser277 together coordinate [4Fe-4S] cluster. The Radical SAM core domain maps to 50–266 (WSRGTATFLL…RDEALGMGFS (217 aa)).

Belongs to the radical SAM superfamily. Lipoyl synthase family. [4Fe-4S] cluster is required as a cofactor.

The protein resides in the cytoplasm. It carries out the reaction [[Fe-S] cluster scaffold protein carrying a second [4Fe-4S](2+) cluster] + N(6)-octanoyl-L-lysyl-[protein] + 2 oxidized [2Fe-2S]-[ferredoxin] + 2 S-adenosyl-L-methionine + 4 H(+) = [[Fe-S] cluster scaffold protein] + N(6)-[(R)-dihydrolipoyl]-L-lysyl-[protein] + 4 Fe(3+) + 2 hydrogen sulfide + 2 5'-deoxyadenosine + 2 L-methionine + 2 reduced [2Fe-2S]-[ferredoxin]. Its pathway is protein modification; protein lipoylation via endogenous pathway; protein N(6)-(lipoyl)lysine from octanoyl-[acyl-carrier-protein]: step 2/2. Functionally, catalyzes the radical-mediated insertion of two sulfur atoms into the C-6 and C-8 positions of the octanoyl moiety bound to the lipoyl domains of lipoate-dependent enzymes, thereby converting the octanoylated domains into lipoylated derivatives. This is Lipoyl synthase from Chlorobium phaeovibrioides (strain DSM 265 / 1930) (Prosthecochloris vibrioformis (strain DSM 265)).